The sequence spans 943 residues: Conidiophore development regulator abaA (943 aa).

Disordered regions lie at residues 1–69 and 111–133; these read MSSS…FNGG and TSRQ…HQRG. The span at 29-43 shows a compositional bias: basic and acidic residues; that stretch reads IDTRRSFHGDSRLPL. Over residues 59-68 the composition is skewed to polar residues; that stretch reads PSSAHSSFNG. Positions 161–254 form a DNA-binding region, TEA; that stretch reads QKDKGGVWRR…QVVKKFFEDL (94 aa). The span at 537–555 shows a compositional bias: basic and acidic residues; the sequence is EHQRKKEKRSCGKKPDLER. Disordered regions lie at residues 537–575 and 809–901; these read EHQR…AAWT and GAAG…HHPG. Residues 865–889 show a composition bias toward low complexity; sequence DSWTAGSSAGGAPAATPTGPDWGPT.

This sequence belongs to the TEC1 family.

It localises to the nucleus. In terms of biological role, brlA, abaA and wetA are pivotal regulators of conidiophore development and conidium maturation. They act individually and together to regulate their own expression and that of numerous other sporulation-specific genes. Binds to the sequence 5'-CATTCY-3', where Y is a pyrimidine, making both major- and minor-groove contacts. The polypeptide is Conidiophore development regulator abaA (Hapsidospora chrysogena (Acremonium chrysogenum)).